Here is a 336-residue protein sequence, read N- to C-terminus: C2H2 finger domain transcription factor mtfA (336 aa).

The interval 1–245 (MDVASLISPS…PSPGHQQMIS (245 aa)) is disordered. Polar residues-rich tracts occupy residues 7–29 (ISPSESDTVPTFRSRSIQNSSAS) and 36–56 (EQSTGSYFSAVPTHTTSYSRT). Residues 136–149 (SPSTSSVSAASSSA) are compositionally biased toward low complexity. A compositionally biased stretch (polar residues) spans 168 to 181 (TDRSSISSQGSVQH). Residues 182–210 (AASAPYASPAPSVSSFSSPIEPSTPSTAA) show a composition bias toward low complexity. The segment covering 216–245 (PAPNTFQNPSPFPQTSTASLPSPGHQQMIS) has biased composition (polar residues). C2H2-type zinc fingers lie at residues 272-294 (YICRTCHKAFSRPSSLRIHSHSH) and 300-325 (FRCTHAGCGKAFSVRSNMKRHERGCH).

It localises to the nucleus. Its function is as follows. Transcription factor that controls morphogenesis and virulence. Acts as a positive regulator of gliotixin and protease production. The chain is C2H2 finger domain transcription factor mtfA from Aspergillus fumigatus (strain CBS 144.89 / FGSC A1163 / CEA10) (Neosartorya fumigata).